The sequence spans 226 residues: Ribonuclease 3 (226 aa).

The 123-residue stretch at 5–127 (IFQRGDPIGH…IVAAIYLDCG (123 aa)) folds into the RNase III domain. Position 40 (glutamate 40) interacts with Mg(2+). The active site involves aspartate 44. Residues aspartate 113 and glutamate 116 each contribute to the Mg(2+) site. Glutamate 116 is an active-site residue. Residues 154–224 (DPKTRLQEWL…ATLVIAQLDS (71 aa)) form the DRBM domain.

Belongs to the ribonuclease III family. As to quaternary structure, homodimer. Mg(2+) is required as a cofactor.

It localises to the cytoplasm. The catalysed reaction is Endonucleolytic cleavage to 5'-phosphomonoester.. In terms of biological role, digests double-stranded RNA. Involved in the processing of primary rRNA transcript to yield the immediate precursors to the large and small rRNAs (23S and 16S). Processes some mRNAs, and tRNAs when they are encoded in the rRNA operon. Processes pre-crRNA and tracrRNA of type II CRISPR loci if present in the organism. This chain is Ribonuclease 3, found in Xanthomonas oryzae pv. oryzae (strain KACC10331 / KXO85).